The sequence spans 328 residues: Sin3 histone deacetylase corepressor complex component SDS3 (328 aa).

Low complexity predominate over residues 1 to 22 (MSAAGLLAPAPAPAAAPAAPEY). Residues 1–69 (MSAAGLLAPA…HDEEDYVEMK (69 aa)) form a disordered region. An N-acetylserine modification is found at Ser2. Residues 2–170 (SAAGLLAPAP…IENEKLTMEL (169 aa)) form a mediates interaction with USP17L2 region. Composition is skewed to acidic residues over residues 23 to 37 (YPED…EDDE) and 45 to 54 (SDEDTEDASE). A phosphoserine mark is found at Ser32 and Ser45. Thr49 carries the post-translational modification Phosphothreonine. Ser53 is modified (phosphoserine). The span at 56-69 (DLAKHDEEDYVEMK) shows a compositional bias: basic and acidic residues. A coiled-coil region spans residues 66-171 (VEMKEQMYQD…ENEKLTMELT (106 aa)). Glycyl lysine isopeptide (Lys-Gly) (interchain with G-Cter in SUMO2) cross-links involve residues Lys69, Lys178, and Lys201. The tract at residues 188–226 (RPNDPVPIPDKRRKPAPAQLNYLLTDEQIMEDLRTLNKL) is sin3 interaction domain (SID). Residues 226 to 252 (LKSPKRPASPSSPEHLPATPAESPAQR) form a disordered region. Phosphoserine is present on residues Ser228, Ser234, and Ser237. Position 244 is a phosphothreonine (Thr244).

This sequence belongs to the SDS3 family. In terms of assembly, interacts with HCFC1. Homodimer. Component of the SIN3 histone deacetylase (HDAC) corepressor complex. Interacts with SIN3A. Interaction with SIN3B enhances the interaction between SIN3B and HDAC1 to form a complex. Component of a mSin3A corepressor complex that contains SIN3A, SAP130, SUDS3/SAP45, ARID4B/SAP180, HDAC1 and HDAC2. Interacts with USP17L2; the interaction is direct. Interacts with FOXK2. Polyubiquitinated. 'Lys-63'-polyubiquitinated SUDS3 positively regulates histone deacetylation. Regulated through deubiquitination by USP17L2/USP17 that cleaves 'Lys-63'-linked ubiquitin chains. Expressed in all newborn tissues tested, including brain, kidney and liver.

The protein localises to the nucleus. Its function is as follows. Regulatory protein which represses transcription and augments histone deacetylase activity of HDAC1. May have a potential role in tumor suppressor pathways through regulation of apoptosis. May function in the assembly and/or enzymatic activity of the mSin3A corepressor complex or in mediating interactions between the complex and other regulatory complexes. This chain is Sin3 histone deacetylase corepressor complex component SDS3 (Suds3), found in Mus musculus (Mouse).